A 257-amino-acid chain; its full sequence is 5'-nucleotidase SurE (257 aa).

Residues Asp-8, Asp-9, Ser-39, and Asn-87 each coordinate a divalent metal cation. The tract at residues 234–257 (VSPLTAPHPTTGHEGLAGLAEKYQ) is disordered.

It belongs to the SurE nucleotidase family. It depends on a divalent metal cation as a cofactor.

The protein resides in the cytoplasm. The enzyme catalyses a ribonucleoside 5'-phosphate + H2O = a ribonucleoside + phosphate. Functionally, nucleotidase that shows phosphatase activity on nucleoside 5'-monophosphates. This Natronomonas pharaonis (strain ATCC 35678 / DSM 2160 / CIP 103997 / JCM 8858 / NBRC 14720 / NCIMB 2260 / Gabara) (Halobacterium pharaonis) protein is 5'-nucleotidase SurE.